Reading from the N-terminus, the 631-residue chain is Phosphomethylpyrimidine synthase (631 aa).

Substrate is bound by residues Asn239, Met268, Tyr297, His333, Ser353–Gly355, Asp394–Arg397, and Glu433. Residue His437 participates in Zn(2+) binding. Tyr460 serves as a coordination point for substrate. His501 serves as a coordination point for Zn(2+). Positions 581, 584, and 589 each coordinate [4Fe-4S] cluster.

The protein belongs to the ThiC family. Homodimer. Requires [4Fe-4S] cluster as cofactor.

The enzyme catalyses 5-amino-1-(5-phospho-beta-D-ribosyl)imidazole + S-adenosyl-L-methionine = 4-amino-2-methyl-5-(phosphooxymethyl)pyrimidine + CO + 5'-deoxyadenosine + formate + L-methionine + 3 H(+). It functions in the pathway cofactor biosynthesis; thiamine diphosphate biosynthesis. Its function is as follows. Catalyzes the synthesis of the hydroxymethylpyrimidine phosphate (HMP-P) moiety of thiamine from aminoimidazole ribotide (AIR) in a radical S-adenosyl-L-methionine (SAM)-dependent reaction. The chain is Phosphomethylpyrimidine synthase from Salmonella arizonae (strain ATCC BAA-731 / CDC346-86 / RSK2980).